Here is a 368-residue protein sequence, read N- to C-terminus: Ferrochelatase (368 aa).

Residues His-209 and Glu-290 each contribute to the Fe cation site.

Belongs to the ferrochelatase family.

The protein localises to the cytoplasm. The catalysed reaction is heme b + 2 H(+) = protoporphyrin IX + Fe(2+). It functions in the pathway porphyrin-containing compound metabolism; protoheme biosynthesis; protoheme from protoporphyrin-IX: step 1/1. Catalyzes the ferrous insertion into protoporphyrin IX. The chain is Ferrochelatase from Herminiimonas arsenicoxydans.